A 225-amino-acid chain; its full sequence is Small ribosomal subunit protein uS3 (225 aa).

The KH type-2 domain occupies 38–106 (LRAHLRRKLS…DVALNIVEIR (69 aa)).

Belongs to the universal ribosomal protein uS3 family. Part of the 30S ribosomal subunit. Forms a tight complex with proteins S10 and S14.

Functionally, binds the lower part of the 30S subunit head. Binds mRNA in the 70S ribosome, positioning it for translation. The chain is Small ribosomal subunit protein uS3 from Gluconacetobacter diazotrophicus (strain ATCC 49037 / DSM 5601 / CCUG 37298 / CIP 103539 / LMG 7603 / PAl5).